Consider the following 88-residue polypeptide: Small ribosomal subunit protein bS20 (88 aa).

The protein belongs to the bacterial ribosomal protein bS20 family.

Its function is as follows. Binds directly to 16S ribosomal RNA. This is Small ribosomal subunit protein bS20 from Chelativorans sp. (strain BNC1).